The primary structure comprises 146 residues: D-aminoacyl-tRNA deacylase (146 aa).

Residues 138–139 (GP) carry the Gly-cisPro motif, important for rejection of L-amino acids motif.

It belongs to the DTD family. As to quaternary structure, homodimer.

Its subcellular location is the cytoplasm. The enzyme catalyses glycyl-tRNA(Ala) + H2O = tRNA(Ala) + glycine + H(+). It catalyses the reaction a D-aminoacyl-tRNA + H2O = a tRNA + a D-alpha-amino acid + H(+). Functionally, an aminoacyl-tRNA editing enzyme that deacylates mischarged D-aminoacyl-tRNAs. Also deacylates mischarged glycyl-tRNA(Ala), protecting cells against glycine mischarging by AlaRS. Acts via tRNA-based rather than protein-based catalysis; rejects L-amino acids rather than detecting D-amino acids in the active site. By recycling D-aminoacyl-tRNA to D-amino acids and free tRNA molecules, this enzyme counteracts the toxicity associated with the formation of D-aminoacyl-tRNA entities in vivo and helps enforce protein L-homochirality. The chain is D-aminoacyl-tRNA deacylase from Xanthomonas euvesicatoria pv. vesicatoria (strain 85-10) (Xanthomonas campestris pv. vesicatoria).